We begin with the raw amino-acid sequence, 102 residues long: Large ribosomal subunit protein bL21 (102 aa).

Belongs to the bacterial ribosomal protein bL21 family. In terms of assembly, part of the 50S ribosomal subunit. Contacts protein L20.

Its function is as follows. This protein binds to 23S rRNA in the presence of protein L20. This Levilactobacillus brevis (strain ATCC 367 / BCRC 12310 / CIP 105137 / JCM 1170 / LMG 11437 / NCIMB 947 / NCTC 947) (Lactobacillus brevis) protein is Large ribosomal subunit protein bL21.